Consider the following 466-residue polypeptide: Putative proline/betaine transporter (466 aa).

12 helical membrane-spanning segments follow: residues 20 to 42 (VVATGIGNAMEWFDFGVYAYTTA), 63 to 83 (FAALAIAFLLRPIGGVVFGII), 91 to 111 (VVLTSTIILMAFSTLTIGLLP), 116 to 136 (IGLWAPILLLLARVLQGFSTG), 164 to 184 (IGTLSGYIAASIMIAVLTFFL), 191 to 211 (SFGWRIPFLLGLFLGLFGLYL), 239 to 259 (IIRFYYIDIFVCFVAVVFFNV), 285 to 305 (VLITCVMAIMIPLALMFGKLA), 313 to 332 (VFLIGTGGLTLFSIIAFMLL), 337 to 354 (FVVIVIGIFILGFFLSTY), 377 to 397 (VTFNISVSIFGGTTPLVATWL), and 405 to 425 (LAPAYYLTAISVIGFLVITFL).

The protein belongs to the major facilitator superfamily. Metabolite:H+ Symporter (MHS) family (TC 2.A.1.6) family.

The protein localises to the cell membrane. Its function is as follows. May be a proton symporter involved in the uptake of osmolytes such as proline and glycine betaine. This Staphylococcus aureus (strain MSSA476) protein is Putative proline/betaine transporter (proP).